Consider the following 102-residue polypeptide: MILLKLYLTLAAILCQSRGMTSLDLDDLMTTNPEIQNEIINKHNDLRRTVDPPAKNMLKMSWDNIIAESAKRAALRCNYKEHTSIAERTIGGCGVWEKILSC.

The N-terminal stretch at 1–19 (MILLKLYLTLAAILCQSRG) is a signal peptide. An SCP domain is found at 41 to 80 (NKHNDLRRTVDPPAKNMLKMSWDNIIAESAKRAALRCNYK).

This sequence belongs to the CRISP family. In terms of processing, contains 8 disulfide bonds. In terms of tissue distribution, expressed by the venom gland.

It localises to the secreted. Its function is as follows. Blocks ryanodine receptors, and potassium channels. The polypeptide is Cysteine-rich venom protein VAR9 (Varanus varius (Lace monitor lizard)).